We begin with the raw amino-acid sequence, 410 residues long: Retrovirus-related Pol polyprotein from type-1 retrotransposable element R1 2 (410 aa).

One can recognise a Reverse transcriptase domain in the interval 1–118; it reads GCPQGSIGGP…SCFRYLGVNV (118 aa). Residues 254 to 410 are nucleic acid-binding endonuclease; that stretch reads SSVIKLERLV…RLNLELDVNG (157 aa).

It catalyses the reaction DNA(n) + a 2'-deoxyribonucleoside 5'-triphosphate = DNA(n+1) + diphosphate. The protein is Retrovirus-related Pol polyprotein from type-1 retrotransposable element R1 2 of Nasonia vitripennis (Parasitic wasp).